The primary structure comprises 232 residues: GTP cyclohydrolase III (232 aa).

This sequence belongs to the archaeal-type GTP cyclohydrolase family.

It carries out the reaction GTP + 3 H2O = 2-amino-5-formylamino-6-(5-phospho-D-ribosylamino)pyrimidin-4(3H)-one + 2 phosphate + 2 H(+). Its function is as follows. Catalyzes the formation of 2-amino-5-formylamino-6-ribofuranosylamino-4(3H)-pyrimidinone ribonucleotide monophosphate and inorganic phosphate from GTP. Also has an independent pyrophosphate phosphohydrolase activity. In Saccharolobus islandicus (strain Y.G.57.14 / Yellowstone #1) (Sulfolobus islandicus), this protein is GTP cyclohydrolase III.